The chain runs to 482 residues: Pancreatic lipase-related protein 2 (482 aa).

The signal sequence occupies residues 1-30 (MPMDVRGCLFPSVQMLLCWLVSLLLATVGG). Cys-34 and Cys-40 are disulfide-bonded. Residue Asn-92 is glycosylated (N-linked (GlcNAc...) asparagine). The required for galactolipase activity stretch occupies residues 106–118 (IHGFIDKGEEGWL). Residues Cys-122 and Cys-133 are joined by a disulfide bond. Ser-184 (nucleophile) is an active-site residue. Asp-208 functions as the Charge relay system in the catalytic mechanism. Ca(2+)-binding residues include Glu-219, Arg-222, Asp-224, and Asp-227. A disulfide bond links Cys-269 and Cys-293. The required for galactolipase activity stretch occupies residues 270–292 (QKNILSTIVDINGIWEGTRNFAA). The active-site Charge relay system is His-295. 2 disulfides stabilise this stretch: Cys-317–Cys-328 and Cys-331–Cys-336. 2 N-linked (GlcNAc...) asparagine glycosylation sites follow: Asn-366 and Asn-441. A PLAT domain is found at 370 to 482 (WRYKVSVTLS…EDVLQSLYPC (113 aa)). Residues Cys-466 and Cys-482 are joined by a disulfide bond.

It belongs to the AB hydrolase superfamily. Lipase family. In terms of tissue distribution, expressed in acinar cells of pancreas (at protein level).

The protein localises to the secreted. Its subcellular location is the zymogen granule membrane. The protein resides in the cell projection. It is found in the neuron projection. It catalyses the reaction a triacylglycerol + H2O = a diacylglycerol + a fatty acid + H(+). The catalysed reaction is a 1,2-diacyl-3-O-(beta-D-galactosyl)-sn-glycerol + 2 H2O = 3-beta-D-galactosyl-sn-glycerol + 2 a fatty acid + 2 H(+). The enzyme catalyses 1,2,3-tri-(9Z-octadecenoyl)-glycerol + H2O = di-(9Z)-octadecenoylglycerol + (9Z)-octadecenoate + H(+). It carries out the reaction di-(9Z)-octadecenoylglycerol + H2O = (9Z-octadecenoyl)-glycerol + (9Z)-octadecenoate + H(+). It catalyses the reaction (9Z-octadecenoyl)-glycerol + H2O = glycerol + (9Z)-octadecenoate + H(+). The catalysed reaction is 1-(9Z-octadecenoyl)-glycerol + H2O = glycerol + (9Z)-octadecenoate + H(+). The enzyme catalyses 1,2,3-tripropanoylglycerol + H2O = dipropanoylglycerol + propanoate + H(+). It carries out the reaction 1,2,3-tributanoylglycerol + H2O = dibutanoylglycerol + butanoate + H(+). It catalyses the reaction 1,2,3-trioctanoylglycerol + H2O = dioctanoylglycerol + octanoate + H(+). The catalysed reaction is 1,2-didecanoylglycerol + H2O = decanoylglycerol + decanoate + H(+). The enzyme catalyses long chain 1,2-diacyl-3-O-beta-D-galactosyl-sn-glycerol + H2O = long chain acyl-3-O-beta-D-galactosyl-sn-glycerol + a fatty acid + H(+). It carries out the reaction 1,2-dioctanoyl-3-O-beta-D-galactosyl-sn-glycerol + H2O = octanoyl-3-(beta-D-galactosyl)-sn-glycerol + octanoate + H(+). It catalyses the reaction 1,2-didodecanoyl-3-beta-D-galactosyl-sn-glycerol + H2O = dodecanoyl-3-beta-D-galactosyl-sn-glycerol + dodecanoate + H(+). The catalysed reaction is 1-beta-D-galactosyl-2,3-didodecanoyl-sn-glycerol + H2O = 1-beta-D-galactosyl-dodecanoyl-sn-glycerol + dodecanoate + H(+). The enzyme catalyses a 1,2-diacyl-3-O-[alpha-D-galactosyl-(1-&gt;6)-beta-D-galactosyl]-sn-glycerol + H2O = acyl-3-O-[alpha-D-galactosyl-(1-&gt;6)-beta-D-galactosyl]-sn-glycerol + a fatty acid + H(+). It carries out the reaction long chain 1,2-diacyl-3-O-[alpha-D-galactosyl-(1-&gt;6)-beta-D-galactosyl]-sn-glycerol + H2O = long chain acyl-3-O-[alpha-D-galactosyl-(1-&gt;6)-beta-D-galactosyl]-sn-glycerol + a fatty acid + H(+). It catalyses the reaction 1,2-dioctanoyl-3-O-[alpha-D-galactosyl-(1-&gt;6)-beta-D-galactosyl]-sn-glycerol + H2O = octanoyl-3-O-[alpha-D-galactosyl-(1-&gt;6)-beta-D-galactosyl]-sn-glycerol + octanoate + H(+). The catalysed reaction is 1,2-didodecanoyl-3-O-[alpha-D-galactosyl-(1-&gt;6)-beta-D-galactosyl]-sn-glycerol + H2O = dodecanoyl-3-O-[alpha-D-galactosyl-(1-&gt;6)-beta-D-galactosyl]-sn-glycerol + dodecanoate + H(+). The enzyme catalyses a 1,2-diacyl-sn-glycero-3-phosphocholine + H2O = a monoacyl-sn-glycero-3-phosphocholine + a fatty acid + H(+). It participates in glycerolipid metabolism; triacylglycerol degradation. It functions in the pathway glycolipid metabolism. With respect to regulation, CLPS stimulates triacylglycerol lipase activity. Triacylglycerol lipase activity is not inhibited by increasing bile salt concentration. Functionally, lipase that primarily hydrolyzes triglycerides and galactosylglycerides. In neonates, may play a major role in pancreatic digestion of dietary fats such as milk fat globules enriched in long-chain triglycerides. Hydrolyzes short-, medium- and long-chain fatty acyls in triglycerides without apparent positional specificity. Can completely deacylate triacylglycerols. When the liver matures and bile salt synthesis increases, likely functions mainly as a galactolipase and monoacylglycerol lipase. Hydrolyzes monogalactosyldiglycerols (MGDG) and digalactosyldiacylglycerols (DGDG) present in a plant-based diet, releasing long-chain polyunsaturated fatty acids. Hydrolyzes medium- and long-chain fatty acyls in galactolipids. May act together with LIPF to hydrolyze partially digested triglycerides. Hydrolyzes long-chain monoglycerides with high efficiency. In cytotoxic T cells, contributes to perforin-dependent cell lysis, but is unlikely to mediate direct cytotoxicity. Also has low phospholipase activity. In neurons, required for the localization of the phospholipid 1-oleoyl-2-palmitoyl-PC (OPPC) to neurite tips through acyl chain remodeling of membrane phospholipids. The resulting OPPC-rich lipid membrane domain recruits the t-SNARE protein STX4 by selectively interacting with the STX4 transmembrane domain and this promotes surface expression of the dopamine transporter SLC6A3/DAT at neurite tips by facilitating fusion of SLC6A3-containing transport vesicles with the plasma membrane. The sequence is that of Pancreatic lipase-related protein 2 from Mus musculus (Mouse).